Here is a 113-residue protein sequence, read N- to C-terminus: UPF0060 membrane protein CV_3485 (113 aa).

A run of 4 helical transmembrane segments spans residues 12 to 32, 37 to 57, 67 to 87, and 91 to 111; these read GLFVLTALAEIVGCYLPWLVL, SLWLLAPTTLALALFAWLLTL, AAYGGVYVTVAIAWLWLVDGV, and RWDALGCALALAGMAVIMLAP.

Belongs to the UPF0060 family.

The protein localises to the cell inner membrane. The protein is UPF0060 membrane protein CV_3485 of Chromobacterium violaceum (strain ATCC 12472 / DSM 30191 / JCM 1249 / CCUG 213 / NBRC 12614 / NCIMB 9131 / NCTC 9757 / MK).